A 705-amino-acid polypeptide reads, in one-letter code: Polyribonucleotide nucleotidyltransferase (705 aa).

Positions 487 and 493 each coordinate Mg(2+). The KH domain occupies 554 to 613; the sequence is PKILTMAIEPDKIRDVIGPSGKQINQIIDETGVKIDIEQDGSIFISSTDNEMNKKAKQII. In terms of domain architecture, S1 motif spans 623–691; sequence GQIYLGKVKR…RQGRVNLSRK (69 aa).

It belongs to the polyribonucleotide nucleotidyltransferase family. It depends on Mg(2+) as a cofactor.

It is found in the cytoplasm. The enzyme catalyses RNA(n+1) + phosphate = RNA(n) + a ribonucleoside 5'-diphosphate. In terms of biological role, involved in mRNA degradation. Catalyzes the phosphorolysis of single-stranded polyribonucleotides processively in the 3'- to 5'-direction. This is Polyribonucleotide nucleotidyltransferase from Oceanobacillus iheyensis (strain DSM 14371 / CIP 107618 / JCM 11309 / KCTC 3954 / HTE831).